The chain runs to 347 residues: Phosphate acyltransferase (347 aa).

It belongs to the PlsX family. Homodimer. Probably interacts with PlsY.

It localises to the cytoplasm. It carries out the reaction a fatty acyl-[ACP] + phosphate = an acyl phosphate + holo-[ACP]. It participates in lipid metabolism; phospholipid metabolism. In terms of biological role, catalyzes the reversible formation of acyl-phosphate (acyl-PO(4)) from acyl-[acyl-carrier-protein] (acyl-ACP). This enzyme utilizes acyl-ACP as fatty acyl donor, but not acyl-CoA. The protein is Phosphate acyltransferase of Rhizobium meliloti (strain 1021) (Ensifer meliloti).